Reading from the N-terminus, the 208-residue chain is uncharacterized protein (208 aa).

A compositionally biased stretch (basic and acidic residues) spans 1–18; sequence MSPTKDSHPSPHFPRDSG. 2 disordered regions span residues 1–122 and 135–208; these read MSPT…LPPP and RECH…TPDG.

This is an uncharacterized protein from Homo sapiens (Human).